Here is a 192-residue protein sequence, read N- to C-terminus: dTTP/UTP pyrophosphatase (192 aa).

Residue Asp72 is the Proton acceptor of the active site.

This sequence belongs to the Maf family. YhdE subfamily. Requires a divalent metal cation as cofactor.

It localises to the cytoplasm. It carries out the reaction dTTP + H2O = dTMP + diphosphate + H(+). The enzyme catalyses UTP + H2O = UMP + diphosphate + H(+). Its function is as follows. Nucleoside triphosphate pyrophosphatase that hydrolyzes dTTP and UTP. May have a dual role in cell division arrest and in preventing the incorporation of modified nucleotides into cellular nucleic acids. In Geobacter metallireducens (strain ATCC 53774 / DSM 7210 / GS-15), this protein is dTTP/UTP pyrophosphatase.